The following is a 161-amino-acid chain: Endoribonuclease YbeY (161 aa).

3 residues coordinate Zn(2+): His-127, His-131, and His-137.

The protein belongs to the endoribonuclease YbeY family. Requires Zn(2+) as cofactor.

It localises to the cytoplasm. In terms of biological role, single strand-specific metallo-endoribonuclease involved in late-stage 70S ribosome quality control and in maturation of the 3' terminus of the 16S rRNA. This is Endoribonuclease YbeY from Listeria monocytogenes serotype 4b (strain CLIP80459).